The chain runs to 163 residues: Probable ribosome biogenesis protein RLP24 (163 aa).

It belongs to the eukaryotic ribosomal protein eL24 family. Associated with nucleolar and cytoplasmic pre-60S particles. At the end of biogenesis it dissociates from cytoplasmic pre-60S particles and is likely to be exchanged for its ribosomal homolog, RPL24.

Its subcellular location is the nucleus. It localises to the nucleolus. In terms of biological role, involved in the biogenesis of the 60S ribosomal subunit. Ensures the docking of GTPBP4/NOG1 to pre-60S particles. The polypeptide is Probable ribosome biogenesis protein RLP24 (RSL24D1) (Homo sapiens (Human)).